We begin with the raw amino-acid sequence, 431 residues long: Histidinol dehydrogenase (431 aa).

NAD(+)-binding residues include Tyr-127, Gln-185, and Asn-208. 3 residues coordinate substrate: Ser-234, Gln-256, and His-259. Residues Gln-256 and His-259 each contribute to the Zn(2+) site. Catalysis depends on proton acceptor residues Glu-323 and His-324. 4 residues coordinate substrate: His-324, Asp-357, Glu-411, and His-416. A Zn(2+)-binding site is contributed by Asp-357. Position 416 (His-416) interacts with Zn(2+).

This sequence belongs to the histidinol dehydrogenase family. The cofactor is Zn(2+).

It catalyses the reaction L-histidinol + 2 NAD(+) + H2O = L-histidine + 2 NADH + 3 H(+). It functions in the pathway amino-acid biosynthesis; L-histidine biosynthesis; L-histidine from 5-phospho-alpha-D-ribose 1-diphosphate: step 9/9. Catalyzes the sequential NAD-dependent oxidations of L-histidinol to L-histidinaldehyde and then to L-histidine. In Vibrio cholerae serotype O1 (strain ATCC 39315 / El Tor Inaba N16961), this protein is Histidinol dehydrogenase.